Here is a 244-residue protein sequence, read N- to C-terminus: tRNA pseudouridine synthase A (244 aa).

The active-site Nucleophile is Asp52. Residue Tyr110 coordinates substrate.

The protein belongs to the tRNA pseudouridine synthase TruA family. In terms of assembly, homodimer.

The enzyme catalyses uridine(38/39/40) in tRNA = pseudouridine(38/39/40) in tRNA. In terms of biological role, formation of pseudouridine at positions 38, 39 and 40 in the anticodon stem and loop of transfer RNAs. This is tRNA pseudouridine synthase A from Clostridium acetobutylicum (strain ATCC 824 / DSM 792 / JCM 1419 / IAM 19013 / LMG 5710 / NBRC 13948 / NRRL B-527 / VKM B-1787 / 2291 / W).